A 473-amino-acid polypeptide reads, in one-letter code: GTPase Der (473 aa).

EngA-type G domains follow at residues 3–167 and 203–378; these read FKVA…KGLE and LRVA…TFWN. Residues 9-16, 56-60, 119-122, 209-216, 256-260, and 321-324 each bind GTP; these read GRPNVGKS, DTAGL, NKCE, DTAGM, and NKWD. Residues 379 to 463 form the KH-like domain; the sequence is ARVPTARLNR…PIRLFMRKTH (85 aa).

Belongs to the TRAFAC class TrmE-Era-EngA-EngB-Septin-like GTPase superfamily. EngA (Der) GTPase family. As to quaternary structure, associates with the 50S ribosomal subunit.

Functionally, GTPase that plays an essential role in the late steps of ribosome biogenesis. The polypeptide is GTPase Der (Parvibaculum lavamentivorans (strain DS-1 / DSM 13023 / NCIMB 13966)).